The following is a 660-amino-acid chain: Kinesin-like protein KIF2A (660 aa).

Residues 1-140 (MVTSLNEDNE…QQELREKRAQ (140 aa)) form a disordered region. The tract at residues 1–171 (MVTSLNEDNE…LDYRPLTTAD (171 aa)) is globular. Serine 48 bears the Phosphoserine mark. 2 positions are modified to phosphothreonine: threonine 51 and threonine 70. Serine 73 bears the Phosphoserine mark. Residue lysine 75 is modified to N6-acetyllysine. Residues 96–106 (LPEQSSSAQQN) are compositionally biased toward polar residues. A compositionally biased stretch (basic and acidic residues) spans 113–140 (CVKEVEKLQEKREKRRLQQQELREKRAQ). The Kinesin motor domain maps to 177–507 (RICVCVRKRP…LRYANRVKEL (331 aa)). 267–274 (GQTGSGKT) provides a ligand contact to ATP. Residues 614–653 (ATQLEAILEQKIDILTELRDKVKSFRAALQEEEQASKQIN) adopt a coiled-coil conformation.

This sequence belongs to the TRAFAC class myosin-kinesin ATPase superfamily. Kinesin family. MCAK/KIF2 subfamily. Interacts with AURKA and PLK1. Interacts with PSRC1. Interacts with MCRS1; the interaction enhances recruitment of KIF2A to the minus ends of spindle microtubules which promotes chromosome alignment.

It localises to the cytoplasm. It is found in the cytoskeleton. The protein localises to the microtubule organizing center. The protein resides in the centrosome. Its subcellular location is the spindle pole. It localises to the spindle. Plus end-directed microtubule-dependent motor required for normal brain development. May regulate microtubule dynamics during axonal growth. Required for normal progression through mitosis. Required for normal congress of chromosomes at the metaphase plate. Required for normal spindle dynamics during mitosis. Promotes spindle turnover. Implicated in formation of bipolar mitotic spindles. Has microtubule depolymerization activity. The protein is Kinesin-like protein KIF2A (KIF2A) of Bos taurus (Bovine).